The primary structure comprises 426 residues: Dihydroorotase (426 aa).

Zn(2+)-binding residues include His-61 and His-63. Residues 63 to 65 (HCR) and Asn-95 contribute to the substrate site. Residues Glu-146, His-180, His-229, and Asp-297 each contribute to the Zn(2+) site. Residue Asp-297 is part of the active site. His-301 serves as a coordination point for substrate.

It belongs to the metallo-dependent hydrolases superfamily. DHOase family. Class I DHOase subfamily. Zn(2+) is required as a cofactor.

The enzyme catalyses (S)-dihydroorotate + H2O = N-carbamoyl-L-aspartate + H(+). It participates in pyrimidine metabolism; UMP biosynthesis via de novo pathway; (S)-dihydroorotate from bicarbonate: step 3/3. Its function is as follows. Catalyzes the reversible cyclization of carbamoyl aspartate to dihydroorotate. The protein is Dihydroorotase of Methanopyrus kandleri (strain AV19 / DSM 6324 / JCM 9639 / NBRC 100938).